The primary structure comprises 283 residues: Acetylglutamate kinase (283 aa).

Substrate is bound by residues 63–64 (GG), R85, and N178.

It belongs to the acetylglutamate kinase family. ArgB subfamily.

Its subcellular location is the cytoplasm. It catalyses the reaction N-acetyl-L-glutamate + ATP = N-acetyl-L-glutamyl 5-phosphate + ADP. Its pathway is amino-acid biosynthesis; L-arginine biosynthesis; N(2)-acetyl-L-ornithine from L-glutamate: step 2/4. Its function is as follows. Catalyzes the ATP-dependent phosphorylation of N-acetyl-L-glutamate. The polypeptide is Acetylglutamate kinase (Prochlorococcus marinus (strain MIT 9301)).